The chain runs to 248 residues: Putative transposase YncI (248 aa).

It belongs to the transposase 11 family.

This is Putative transposase YncI (yncI) from Escherichia coli (strain K12).